We begin with the raw amino-acid sequence, 1902 residues long: MQRKKKGLSILLAGTVALGALAVLPVGEIQAKAAISQQTKGSSLANTVTAATAKQAATDTTAATTNQAIATQLAAKGIDYNKLNKVQQQDIYVDVIVQMSAAPASENGTLRTDYSSTAEIQQETNKVIAAQASVKAAVEQVTQQTAGESYGYVVNGFSTKVRVVDIPKLKQIAGVKTVTLAKVYYPTDAKANSMANVQAVWSNYKYKGEGTVVSVIDSGIDPTHKDMRLSDDKDVKLTKSDVEKFTDTAKHGRYFNSKVPYGFNYADNNDTITDDTVDEQHGMHVAGIIGANGTGDDPAKSVVGVAPEAQLLAMKVFTNSDTSATTGSSTLVSAIEDSAKIGADVLNMSLGSDSGNQTLEDPELAAVQNANESGTAAVISAGNSGTSGSATEGVNKDYYGLQDNEMVGTPGTSRGATTVASAENTDVITQAVTITDGTGLQLGPGTIQLSSNDFTGSFDQKKFYVVKDASGNLSKGALADYTADAKGKIAIVKRGELSFDDKQKYAQAAGAAGLIIVNNDGTATPVTSMALTTTFPTFGLSSVTGQKLVDWVTAHPDDSLGVKIALTLVPNQKYTEDKMSDFTSYGPVSNLSFKPDITAPGGNIWSTQNNNGYTNMSGTSMASPFIAGSQALLKQALNNKNNPFYAYYKQLKGTALTDFLKTVEMNTAQPINDINYNNVIVSPRRQGAGLVDVKAAIDALEKNPSTVVAENGYPAVELKDFTSTDKTFKLTFTNSTTHELTYQMDSNTDTNAVYTSATDPNSGVLYDKKIDGAAIKAGSNITVPAGKTAQIEFTLSLPKSFDQQQFVEGFLNFKGSDGSRLNLPYMGFFGDWNDGKIVDSLNGITYSPAGGNFGTVPLLTNKNTGTQYYGGMVTDADGNQTVDDQAIAFSSDKNALYNDISMKYYLLRNISNVQVDILDGQGNKVTTLSSSTNLTKTYYNAHSQQYIYYNAPAWDGTYYDQRDGNIKTADDGSYTYRISGVPEGGDKRQVFDVPFKLDSKAPTVRHVALSAKTENGKTQYYLTAEAKDDLSGLDATKSVKTAINEVTNLDATFTDAGTTADGYTKIETPLSDEQAQALGNGDNSAELYLTDNASNATDQDASVQKPGSTSFDLIVNGGGIPDKISSTTTGYEANTQGGGTYTFSGTYPAAVDGTYTNAQGKKHDLNTTYDAATNSFTASMPVTNADYAAQVDLYADKAHTQLLKHFDTKVRLTAPTFTDLKFNNGSDQTSEATIKVTGTVSADTKTVNVGDTVAALDAQHHFSVDVPVNYGDNTIKVTATDEDGNTTTEQKTITSSYDPDMLKNSVTFDQGVTFGANEFNATSAKFYDPKTGIATITGKVKHPTTTLQVDGKQIPIKDDLTFSFTLDLGTLGQKPFGVVVGDTTQNKTFQEALTFILDAVAPTLSLESSTDAPVYTNDPNFQITGTATDNAQYLSLSINGSSVASQYVDININSGKPGHMAIDQPVKLLEGKNVLTVAVTDSEDNTTTKNITVYYEPKKTLAAPTVTPSTTEPAKTVTLTANSAATGETVQYSADGGKTYQDVPAAGVTVTANGTFKFKSTDLYGNESPAVDYVVTNIKADDPAQLQAAKQELTNLIASAKTLSASGKYDDATTTALAAATQKAQTALDQTNASVDSLTGANRDLQTAINQLAAKLPADKKTSLLNQLQSVKAALGTDLGNQTDPSTGKTFTAALDDLVAQAQAGTQTDDQHQATLAKVLDAVLAKLAEGIKAATPAEVGNAKDAATGKTWYADIADTLTSGQASADASDKLAHLQALQSLKTKVAAAVEAAKTVGKGDGTTGTSDKGGGQGTPAPAPGDIGKDKGDEGSQPSSGGNIPTNPATTTSTSTDDTTDRNGQLTSGKGALPKTGETTERPAFGFLGVIVVILMGVLGLKRKQREE.

Positions 1–33 (MQRKKKGLSILLAGTVALGALAVLPVGEIQAKA) are cleaved as a signal peptide. A propeptide spanning residues 34-187 (AISQQTKGSS…VTLAKVYYPT (154 aa)) is cleaved from the precursor. A Peptidase S8 domain is found at 191 to 697 (ANSMANVQAV…AGLVDVKAAI (507 aa)). Residues D217, H281, and S620 each act as charge relay system in the active site. The segment at 1796-1874 (GKGDGTTGTS…GALPKTGETT (79 aa)) is disordered. The segment covering 1797 to 1812 (KGDGTTGTSDKGGGQG) has biased composition (gly residues). Positions 1830-1843 (SQPSSGGNIPTNPA) are enriched in polar residues. The LPXTG sorting signal signature appears at 1867-1871 (LPKTG). T1870 bears the Pentaglycyl murein peptidoglycan amidated threonine mark. A propeptide spans 1871-1902 (GETTERPAFGFLGVIVVILMGVLGLKRKQREE) (removed by sortase).

The protein belongs to the peptidase S8 family.

It localises to the secreted. It is found in the cell wall. It carries out the reaction Endopeptidase activity with very broad specificity, although some subsite preference have been noted, e.g. large hydrophobic residues in the P1 and P4 positions, and Pro in the P2 position. Best known for its action on caseins, although it has been shown to hydrolyze hemoglobin and oxidized insulin B-chain.. Protease which breaks down milk proteins during the growth of the bacteria on milk. This Lactococcus lactis subsp. cremoris (Streptococcus cremoris) protein is PI-type proteinase (prtP).